The chain runs to 2998 residues: Probable polyketide synthase 14 (2998 aa).

A Ketosynthase family 3 (KS3) domain is found at 19–456; that stretch reads EDDIAIIGIG…GSNCCLILSE (438 aa). Residues Cys189, His331, and His376 each act as for beta-ketoacyl synthase activity in the active site. The tract at residues 657 to 690 is acyl/malonyl transferase; the sequence is GIEASFIVGHSLGEIPAAYCSGMITLDTLCYLIY. Ser667 functions as the For acyl/malonyl transferase activity in the catalytic mechanism. The interval 962-1084 is N-terminal hotdog fold; the sequence is IDQLGFSLIE…GNFQLFTSGN (123 aa). Residues 962-1249 enclose the PKS/mFAS DH domain; the sequence is IDQLGFSLIE…CKSLTIIKDS (288 aa). His996 functions as the Proton acceptor; for dehydratase activity in the catalytic mechanism. Residues 1101-1249 form a C-terminal hotdog fold region; sequence NLTKLTKNEL…CKSLTIIKDS (149 aa). The active-site Proton donor; for dehydratase activity is the Asp1159. The helical transmembrane segment at 1979 to 1999 threads the bilayer; that stretch reads SILIHSGSGGIGLSALNILKW. Residues 2476 to 2553 form the Carrier domain; the sequence is ENDTSIDSLF…SSIKLITNQL (78 aa). O-(pantetheine 4'-phosphoryl)serine is present on Ser2513. The interval 2559–2578 is disordered; that stretch reads DGQQQQHRQNKKNNNIPENK. Residues 2561 to 2573 show a composition bias toward low complexity; sequence QQQQHRQNKKNNN. A helical membrane pass occupies residues 2621-2641; the sequence is IFLTGSTGFLGAYLLWYLIQM.

It depends on pantetheine 4'-phosphate as a cofactor.

Its subcellular location is the membrane. Functionally, probable polyketide synthase. This Dictyostelium discoideum (Social amoeba) protein is Probable polyketide synthase 14 (pks14).